The sequence spans 364 residues: B3 domain-containing protein At5g38490 (364 aa).

The segment at 148–202 is disordered; sequence ASTSSSSLLNLPCLEPSTETKDVPNPNYQSSSPSSCLTGKTNRKRRAVEQRKSGK. Residues 260-364 constitute a DNA-binding region (TF-B3); sequence FQKLIRNDFL…GVLCFALDTE (105 aa).

It is found in the nucleus. This chain is B3 domain-containing protein At5g38490, found in Arabidopsis thaliana (Mouse-ear cress).